Reading from the N-terminus, the 410-residue chain is CinA-like protein (410 aa).

It belongs to the CinA family.

This chain is CinA-like protein, found in Anaeromyxobacter sp. (strain Fw109-5).